The sequence spans 856 residues: Leucine--tRNA ligase (856 aa).

The short motif at 53–63 (PYPSGNLHMGH) is the 'HIGH' region element. The short motif at 622-626 (KMSKS) is the 'KMSKS' region element. Lysine 625 contacts ATP.

This sequence belongs to the class-I aminoacyl-tRNA synthetase family.

The protein resides in the cytoplasm. The catalysed reaction is tRNA(Leu) + L-leucine + ATP = L-leucyl-tRNA(Leu) + AMP + diphosphate. In Prochlorococcus marinus (strain MIT 9312), this protein is Leucine--tRNA ligase.